A 788-amino-acid polypeptide reads, in one-letter code: Endonuclease MutS2 (788 aa).

Gly-334–Thr-341 contributes to the ATP binding site. Residues Leu-713 to Gln-788 form the Smr domain.

It belongs to the DNA mismatch repair MutS family. MutS2 subfamily. In terms of assembly, homodimer. Binds to stalled ribosomes, contacting rRNA.

Endonuclease that is involved in the suppression of homologous recombination and thus may have a key role in the control of bacterial genetic diversity. Functionally, acts as a ribosome collision sensor, splitting the ribosome into its 2 subunits. Detects stalled/collided 70S ribosomes which it binds and splits by an ATP-hydrolysis driven conformational change. Acts upstream of the ribosome quality control system (RQC), a ribosome-associated complex that mediates the extraction of incompletely synthesized nascent chains from stalled ribosomes and their subsequent degradation. Probably generates substrates for RQC. This chain is Endonuclease MutS2, found in Lactobacillus johnsonii (strain CNCM I-12250 / La1 / NCC 533).